The chain runs to 512 residues: Glutathione-binding protein GsiB (512 aa).

The N-terminal stretch at methionine 1–alanine 26 is a signal peptide.

This sequence belongs to the bacterial solute-binding protein 5 family. The complex is composed of two ATP-binding proteins (GsiA), two transmembrane proteins (GsiC and GsiD) and a solute-binding protein (GsiB).

It is found in the periplasm. Its function is as follows. Part of the ABC transporter complex GsiABCD involved in glutathione import. Binds glutathione. In Salmonella choleraesuis (strain SC-B67), this protein is Glutathione-binding protein GsiB.